An 89-amino-acid chain; its full sequence is OMEGA-ectatommitoxin(02)-Rm1b (89 aa).

Positions 1–30 are cleaved as a signal peptide; the sequence is MKDSYISIVIAYLMVTFILVSSMPIEGEKG. Cystine bridges form between Cys39-Cys52, Cys47-Cys68, and Cys70-Cys79. The 38-residue stretch at 43–80 folds into the EGF-like domain; the sequence is YANYCFNGKCVHFVAQDEPGKPCYSCICDKFYIGKRCG.

The protein belongs to the EGF domain peptide family. Expressed by the venom gland.

The protein localises to the secreted. Functionally, ant peptide with probable defensive activity which acts as a potent agonist of the mammalian epidermal growth factor receptor (EGFR). Mimics, both structurally and functionally, vertebrate epidermal growth factor (EGF) peptide hormones. In vivo, intraplantar injection in mice causes long-lasting (several days) hypersensitivity of the injected paw to both mechanical and thermal stimuli. Its long-lasting effect is unusual for venom toxins whose effects are usually immediate. One possible explanation is that it would reduce the duration of a nest attack, discourage future attacks, or enhance the actions of subsequent exposure to other pain-inducing venom peptides. The sequence is that of OMEGA-ectatommitoxin(02)-Rm1b from Rhytidoponera metallica (Australian green-headed ant).